Reading from the N-terminus, the 945-residue chain is 26S proteasome regulatory subunit RPN2 (945 aa).

At serine 2 the chain carries N-acetylserine. 10 PC repeats span residues threonine 366 to phenylalanine 399, glycine 403 to aspartate 440, glycine 445 to glutamate 479, alanine 480 to threonine 514, glycine 516 to tyrosine 549, glycine 550 to arginine 585, alanine 586 to arginine 618, glycine 620 to glutamine 654, alanine 655 to glutamate 692, and glycine 698 to valine 734. The residue at position 801 (threonine 801) is a Phosphothreonine. The segment covering alanine 810 to lysine 819 has biased composition (basic residues). The tract at residues alanine 810–glutamate 851 is disordered. Over residues glutamate 820 to glutamate 851 the composition is skewed to basic and acidic residues. Threonine 932 is subject to Phosphothreonine.

Belongs to the proteasome subunit S1 family. In terms of assembly, interacts with UBR1. In terms of processing, N-acetylated by NAT1.

Acts as a regulatory subunit of the 26S proteasome which is involved in the ATP-dependent degradation of ubiquitinated proteins. The sequence is that of 26S proteasome regulatory subunit RPN2 (RPN2) from Saccharomyces cerevisiae (strain ATCC 204508 / S288c) (Baker's yeast).